The primary structure comprises 350 residues: UDP-rhamnose/UDP-galactose transporter 3 (350 aa).

10 helical membrane-spanning segments follow: residues 12–32 (AVSDMGAWAMNVISSVGIIMA), 41–61 (GFAFSFATTLTGFHFALTALV), 81–101 (LIWFSIVANVSIAAMNFSLML), 104–124 (VGFYQISKLSMIPVVCVMEWI), 133–153 (EVKISVVVVVVGVGICTVTDV), 160–180 (FICACVAIFSSSLQQILIGSL), 200–220 (AFSLLVVGPLVDYLLSGKFIM), 224–244 (MSSGCFLFILLSCGLAVFCNI), 257–277 (SFQVIGHMKTVCILTLGWLLF), and 286–306 (VAGMIVAIVGMVIYSWAMELE).

It belongs to the TPT transporter family. TPT (TC 2.A.7.9) subfamily.

The protein resides in the golgi apparatus membrane. In terms of biological role, nucleotide-sugar transporter that transports UDP-rhamnose or UDP-galactose and UMP in a strict counter-exchange mode. The protein is UDP-rhamnose/UDP-galactose transporter 3 of Arabidopsis thaliana (Mouse-ear cress).